We begin with the raw amino-acid sequence, 308 residues long: Protoheme IX farnesyltransferase (308 aa).

Helical transmembrane passes span 20–40 (VLAY…VTAI), 53–73 (PLLI…ANTF), 102–122 (NALV…WWTT), 124–144 (LLSG…YTLL), 149–169 (TSQN…IGWS), 170–190 (AITD…FFWT), 227–249 (LIYT…WLYM), 254–276 (VAGA…GEPV), and 288–308 (YLAV…PTLF).

This sequence belongs to the UbiA prenyltransferase family. Protoheme IX farnesyltransferase subfamily.

It localises to the cell membrane. It carries out the reaction heme b + (2E,6E)-farnesyl diphosphate + H2O = Fe(II)-heme o + diphosphate. It participates in porphyrin-containing compound metabolism; heme O biosynthesis; heme O from protoheme: step 1/1. Its function is as follows. Converts heme B (protoheme IX) to heme O by substitution of the vinyl group on carbon 2 of heme B porphyrin ring with a hydroxyethyl farnesyl side group. The protein is Protoheme IX farnesyltransferase of Mycobacterium leprae (strain TN).